Reading from the N-terminus, the 138-residue chain is Small ribosomal subunit protein uS11c (138 aa).

It belongs to the universal ribosomal protein uS11 family. As to quaternary structure, part of the 30S ribosomal subunit.

The protein localises to the plastid. The protein resides in the chloroplast. The protein is Small ribosomal subunit protein uS11c of Nandina domestica (Heavenly bamboo).